Consider the following 55-residue polypeptide: Protein CADMIUM TOLERANCE 1 (55 aa).

A helical membrane pass occupies residues 24–40 (GCLYACIFTALCCFCCY).

Belongs to the CYSTM1 family.

It is found in the cell membrane. It localises to the secreted. The protein localises to the cell wall. Functionally, confers resistance to heavy metal ions (e.g. cadmium (CdCl(2)) and copper (CuCl(2))) by chelating them at the plasma membrane of root cells, thus stopping their entry and reducing their accumulation. This chain is Protein CADMIUM TOLERANCE 1, found in Echinochloa crus-galli subsp. caudata (Cockspur).